The sequence spans 103 residues: MAANNRNPESVIEKGKTRLTPPPLYKVILINDDFTPMDFVVKVLRHFFFMDEEMATRIMLKIHTEGAGICGTYPGDIAATKVQQVNEFSKQNQHPLMCVMEKE.

The protein belongs to the ClpS family. Binds to the N-terminal domain of the chaperone ClpA.

Functionally, involved in the modulation of the specificity of the ClpAP-mediated ATP-dependent protein degradation. The protein is ATP-dependent Clp protease adapter protein ClpS of Nitrosomonas eutropha (strain DSM 101675 / C91 / Nm57).